A 467-amino-acid polypeptide reads, in one-letter code: tRNA(Ile)-lysidine synthase (467 aa).

Residue 26–31 participates in ATP binding; sequence SGGPDS.

This sequence belongs to the tRNA(Ile)-lysidine synthase family.

It localises to the cytoplasm. It catalyses the reaction cytidine(34) in tRNA(Ile2) + L-lysine + ATP = lysidine(34) in tRNA(Ile2) + AMP + diphosphate + H(+). In terms of biological role, ligates lysine onto the cytidine present at position 34 of the AUA codon-specific tRNA(Ile) that contains the anticodon CAU, in an ATP-dependent manner. Cytidine is converted to lysidine, thus changing the amino acid specificity of the tRNA from methionine to isoleucine. This is tRNA(Ile)-lysidine synthase from Clostridium tetani (strain Massachusetts / E88).